A 198-amino-acid polypeptide reads, in one-letter code: Recombination protein RecR (198 aa).

The C4-type zinc-finger motif lies at 57–72 (CSVCGHITDRDPCYIC). The Toprim domain maps to 80 to 175 (SVVCVVQEPK…KVTRIAHGLP (96 aa)).

Belongs to the RecR family.

Its function is as follows. May play a role in DNA repair. It seems to be involved in an RecBC-independent recombinational process of DNA repair. It may act with RecF and RecO. In Bacillus mycoides (strain KBAB4) (Bacillus weihenstephanensis), this protein is Recombination protein RecR.